A 507-amino-acid polypeptide reads, in one-letter code: Histidine ammonia-lyase (507 aa).

A cross-link (5-imidazolinone (Ala-Gly)) is located at residues 141-143 (ASG). The residue at position 142 (S142) is a 2,3-didehydroalanine (Ser).

This sequence belongs to the PAL/histidase family. Contains an active site 4-methylidene-imidazol-5-one (MIO), which is formed autocatalytically by cyclization and dehydration of residues Ala-Ser-Gly.

The protein resides in the cytoplasm. The catalysed reaction is L-histidine = trans-urocanate + NH4(+). It participates in amino-acid degradation; L-histidine degradation into L-glutamate; N-formimidoyl-L-glutamate from L-histidine: step 1/3. The sequence is that of Histidine ammonia-lyase from Burkholderia vietnamiensis (strain G4 / LMG 22486) (Burkholderia cepacia (strain R1808)).